The sequence spans 377 residues: Anhydro-N-acetylmuramic acid kinase (377 aa).

An ATP-binding site is contributed by Gly12 to Asp19.

Belongs to the anhydro-N-acetylmuramic acid kinase family.

It catalyses the reaction 1,6-anhydro-N-acetyl-beta-muramate + ATP + H2O = N-acetyl-D-muramate 6-phosphate + ADP + H(+). Its pathway is amino-sugar metabolism; 1,6-anhydro-N-acetylmuramate degradation. It functions in the pathway cell wall biogenesis; peptidoglycan recycling. Its function is as follows. Catalyzes the specific phosphorylation of 1,6-anhydro-N-acetylmuramic acid (anhMurNAc) with the simultaneous cleavage of the 1,6-anhydro ring, generating MurNAc-6-P. Is required for the utilization of anhMurNAc either imported from the medium or derived from its own cell wall murein, and thus plays a role in cell wall recycling. This is Anhydro-N-acetylmuramic acid kinase from Methylorubrum populi (strain ATCC BAA-705 / NCIMB 13946 / BJ001) (Methylobacterium populi).